Reading from the N-terminus, the 200-residue chain is GTP cyclohydrolase-2 (200 aa).

50-54 (RVHSE) contributes to the GTP binding site. Zn(2+) contacts are provided by cysteine 55, cysteine 66, and cysteine 68. GTP contacts are provided by residues glutamine 71, 93–95 (EGR), and threonine 115. The active-site Proton acceptor is the aspartate 127. The Nucleophile role is filled by arginine 129. GTP-binding residues include threonine 150 and lysine 155.

Belongs to the GTP cyclohydrolase II family. Zn(2+) is required as a cofactor.

It catalyses the reaction GTP + 4 H2O = 2,5-diamino-6-hydroxy-4-(5-phosphoribosylamino)-pyrimidine + formate + 2 phosphate + 3 H(+). It participates in cofactor biosynthesis; riboflavin biosynthesis; 5-amino-6-(D-ribitylamino)uracil from GTP: step 1/4. Functionally, catalyzes the conversion of GTP to 2,5-diamino-6-ribosylamino-4(3H)-pyrimidinone 5'-phosphate (DARP), formate and pyrophosphate. In Acinetobacter baumannii (strain SDF), this protein is GTP cyclohydrolase-2.